The chain runs to 603 residues: Aspartate--tRNA(Asp/Asn) ligase (603 aa).

L-aspartate is bound at residue Glu-187. An aspartate region spans residues 211-214 (QQFK). Residues Arg-233 and His-461 each coordinate L-aspartate. 233 to 235 (RDE) serves as a coordination point for ATP. Glu-495 contacts ATP. Residue Arg-502 participates in L-aspartate binding. Position 547–550 (547–550 (GLDR)) interacts with ATP.

It belongs to the class-II aminoacyl-tRNA synthetase family. Type 1 subfamily. As to quaternary structure, homodimer.

Its subcellular location is the cytoplasm. The catalysed reaction is tRNA(Asx) + L-aspartate + ATP = L-aspartyl-tRNA(Asx) + AMP + diphosphate. In terms of biological role, aspartyl-tRNA synthetase with relaxed tRNA specificity since it is able to aspartylate not only its cognate tRNA(Asp) but also tRNA(Asn). Reaction proceeds in two steps: L-aspartate is first activated by ATP to form Asp-AMP and then transferred to the acceptor end of tRNA(Asp/Asn). The sequence is that of Aspartate--tRNA(Asp/Asn) ligase from Chlorobaculum parvum (strain DSM 263 / NCIMB 8327) (Chlorobium vibrioforme subsp. thiosulfatophilum).